The primary structure comprises 290 residues: ATP synthase gamma chain (290 aa).

Belongs to the ATPase gamma chain family. As to quaternary structure, F-type ATPases have 2 components, CF(1) - the catalytic core - and CF(0) - the membrane proton channel. CF(1) has five subunits: alpha(3), beta(3), gamma(1), delta(1), epsilon(1). CF(0) has three main subunits: a, b and c.

It localises to the cell inner membrane. In terms of biological role, produces ATP from ADP in the presence of a proton gradient across the membrane. The gamma chain is believed to be important in regulating ATPase activity and the flow of protons through the CF(0) complex. In Dictyoglomus turgidum (strain DSM 6724 / Z-1310), this protein is ATP synthase gamma chain.